The sequence spans 520 residues: NAD(P)H-quinone oxidoreductase subunit 2 (520 aa).

A run of 14 helical transmembrane segments spans residues 15-35, 42-62, 79-99, 106-126, 132-152, 167-187, 210-230, 244-264, 280-300, 306-326, 334-354, 378-398, 400-420, and 466-486; these read ILPE…DLIL, WIGY…YFQW, LSII…LMSI, GTAL…GMFV, LVMI…LTGY, LLIG…LYGL, LGAV…ISAA, PTPV…ALAI, FVFT…ALAQ, MLAY…IAGT, IFYL…IILF, LGLS…GFFG, IYLF…LGLV, and VGLV…NPLF.

This sequence belongs to the complex I subunit 2 family. As to quaternary structure, NDH-1 can be composed of about 15 different subunits; different subcomplexes with different compositions have been identified which probably have different functions.

The protein resides in the cellular thylakoid membrane. The catalysed reaction is a plastoquinone + NADH + (n+1) H(+)(in) = a plastoquinol + NAD(+) + n H(+)(out). It catalyses the reaction a plastoquinone + NADPH + (n+1) H(+)(in) = a plastoquinol + NADP(+) + n H(+)(out). Its function is as follows. NDH-1 shuttles electrons from an unknown electron donor, via FMN and iron-sulfur (Fe-S) centers, to quinones in the respiratory and/or the photosynthetic chain. The immediate electron acceptor for the enzyme in this species is believed to be plastoquinone. Couples the redox reaction to proton translocation, and thus conserves the redox energy in a proton gradient. Cyanobacterial NDH-1 also plays a role in inorganic carbon-concentration. In Nostoc sp. (strain PCC 7120 / SAG 25.82 / UTEX 2576), this protein is NAD(P)H-quinone oxidoreductase subunit 2.